We begin with the raw amino-acid sequence, 282 residues long: Shikimate dehydrogenase (NADP(+)) (282 aa).

Residues 19–21 and threonine 66 each bind shikimate; that span reads TQS. Residue lysine 70 is the Proton acceptor of the active site. Positions 91 and 107 each coordinate shikimate. NADP(+) contacts are provided by residues 132–136, 155–160, isoleucine 224, and glycine 246; these read GAGGA and NRTITR.

It belongs to the shikimate dehydrogenase family. Homodimer.

It carries out the reaction shikimate + NADP(+) = 3-dehydroshikimate + NADPH + H(+). It functions in the pathway metabolic intermediate biosynthesis; chorismate biosynthesis; chorismate from D-erythrose 4-phosphate and phosphoenolpyruvate: step 4/7. Functionally, involved in the biosynthesis of the chorismate, which leads to the biosynthesis of aromatic amino acids. Catalyzes the reversible NADPH linked reduction of 3-dehydroshikimate (DHSA) to yield shikimate (SA). The chain is Shikimate dehydrogenase (NADP(+)) from Buchnera aphidicola subsp. Baizongia pistaciae (strain Bp).